A 568-amino-acid polypeptide reads, in one-letter code: N66 matrix protein (568 aa).

Positions 1-22 are cleaved as a signal peptide; sequence MWRMTTLLHLTALLVLIPLCHC. Residues 55–567 form the Alpha-carbonic anhydrase domain; that stretch reads AGFSYNRDIC…KHPLRVYKNS (513 aa). Positions 154, 156, and 179 each coordinate Zn(2+). Residues 259–421 are disordered; the sequence is NGNNGNNGNG…NGYNGDNGNS (163 aa). The segment covering 280–290 has biased composition (gly residues); the sequence is GNNGNGNGNNG. The span at 291-318 shows a compositional bias: low complexity; it reads YNGNNGYNGNNGNNGNGNNDNNGNDNNG. Composition is skewed to gly residues over residues 319 to 352 and 362 to 380; these read NNGG…GNNG and NGNG…GNNG. N-linked (GlcNAc...) asparagine glycosylation is present at Asn-389. Gly residues predominate over residues 390–413; that stretch reads GSNGNNGGNGNNGNNGDNGNGDNG. 506–507 provides a ligand contact to substrate; sequence TT. Asn-511 is a glycosylation site (N-linked (GlcNAc...) asparagine).

This sequence belongs to the alpha-carbonic anhydrase family. Homooligomer; disulfide-linked. May also be disulfide-linked to insoluble organic matrix. Zn(2+) serves as cofactor. In terms of tissue distribution, expressed in both the dorsal region of the mantle and the mantle edge. Is dispersed in calcium carbonate and also linked by disulfide bonds to the organic core of nacre.

Its subcellular location is the secreted. It is found in the extracellular space. The protein localises to the extracellular matrix. It carries out the reaction hydrogencarbonate + H(+) = CO2 + H2O. Acts as a negative regulator for calcification in the shells of mollusks. May function both as a calcium concentrator and as a carbonic anhydrase required for production of carbonate ions, which are assembled to CaCO(3) at mineralization sites. Is important for shell formation in both the calcitic prismatic layer and the aragonitic nacreous layer. This is N66 matrix protein from Pinctada maxima (Silver-lipped pearl oyster).